We begin with the raw amino-acid sequence, 76 residues long: uncharacterized protein (76 aa).

One can recognise an HTH cro/C1-type domain in the interval 6 to 60 (LKKNRLEKGFTQEEVAKAAQIGRAYYTMIENGTRKPSVIVSKKIGEKLGFDWTIF). Positions 17 to 36 (QEEVAKAAQIGRAYYTMIEN) form a DNA-binding region, H-T-H motif.

This is an uncharacterized protein from Bacillus subtilis (strain 168).